A 545-amino-acid chain; its full sequence is CTP synthase (545 aa).

The interval 1–266 is amidoligase domain; sequence MATNYIFVTG…DDIVTKRFNL (266 aa). CTP is bound at residue Ser-14. Ser-14 is a UTP binding site. Residues 15-20 and Asp-72 each bind ATP; that span reads SLGKGI. Mg(2+) contacts are provided by Asp-72 and Glu-140. CTP is bound by residues 147–149, 187–192, and Lys-223; these read DIE and KTKPTQ. Residues 187-192 and Lys-223 each bind UTP; that span reads KTKPTQ. 239–241 is an ATP binding site; the sequence is RDV. Residues 291-542 enclose the Glutamine amidotransferase type-1 domain; it reads TVGFVGKYVE…IEAAGEFHKE (252 aa). Gly-352 provides a ligand contact to L-glutamine. The active-site Nucleophile; for glutamine hydrolysis is the Cys-379. L-glutamine-binding positions include 380-383, Glu-403, and Arg-470; that span reads LGMQ. Catalysis depends on residues His-515 and Glu-517.

It belongs to the CTP synthase family. As to quaternary structure, homotetramer.

The enzyme catalyses UTP + L-glutamine + ATP + H2O = CTP + L-glutamate + ADP + phosphate + 2 H(+). It catalyses the reaction L-glutamine + H2O = L-glutamate + NH4(+). The catalysed reaction is UTP + NH4(+) + ATP = CTP + ADP + phosphate + 2 H(+). Its pathway is pyrimidine metabolism; CTP biosynthesis via de novo pathway; CTP from UDP: step 2/2. With respect to regulation, allosterically activated by GTP, when glutamine is the substrate; GTP has no effect on the reaction when ammonia is the substrate. The allosteric effector GTP functions by stabilizing the protein conformation that binds the tetrahedral intermediate(s) formed during glutamine hydrolysis. Inhibited by the product CTP, via allosteric rather than competitive inhibition. Its function is as follows. Catalyzes the ATP-dependent amination of UTP to CTP with either L-glutamine or ammonia as the source of nitrogen. Regulates intracellular CTP levels through interactions with the four ribonucleotide triphosphates. This Idiomarina loihiensis (strain ATCC BAA-735 / DSM 15497 / L2-TR) protein is CTP synthase.